We begin with the raw amino-acid sequence, 465 residues long: Phenylalanine--tRNA ligase alpha subunit (465 aa).

Residues Thr311 and Phe389 each contribute to the L-phenylalanine site. Residue Glu391 participates in Mg(2+) binding.

The protein belongs to the class-II aminoacyl-tRNA synthetase family. Phe-tRNA synthetase alpha subunit type 2 subfamily. In terms of assembly, tetramer of two alpha and two beta subunits. It depends on Mg(2+) as a cofactor.

The protein resides in the cytoplasm. The catalysed reaction is tRNA(Phe) + L-phenylalanine + ATP = L-phenylalanyl-tRNA(Phe) + AMP + diphosphate + H(+). In Metallosphaera sedula (strain ATCC 51363 / DSM 5348 / JCM 9185 / NBRC 15509 / TH2), this protein is Phenylalanine--tRNA ligase alpha subunit.